The following is a 595-amino-acid chain: Sialic acid-binding Ig-like lectin 12 (595 aa).

An N-terminal signal peptide occupies residues 1–18; it reads MLLLLLLLPPLLCGRVGA. 2 Ig-like V-type domains span residues 19-142 and 143-269; these read KEQK…VNVT and ASQD…VHVT. The Extracellular portion of the chain corresponds to 19–481; that stretch reads KEQKDYLLTM…RPISGVTLGA (463 aa). C44 and C104 are disulfide-bonded. Residues N140, N179, N230, and N290 are each glycosylated (N-linked (GlcNAc...) asparagine). 3 disulfides stabilise this stretch: C166–C299, C171–C231, and C293–C342. The 84-residue stretch at 275–358 folds into the Ig-like C2-type 1 domain; it reads PTFSIPGTLE…AGVTMTRAVR (84 aa). N360, N367, and N385 each carry an N-linked (GlcNAc...) asparagine glycan. An Ig-like C2-type 2 domain is found at 365–462; it reads PQNLTMTVFQ…GSQHISLSLS (98 aa). Residues C401 and C446 are joined by a disulfide bond. Residues 482–502 form a helical membrane-spanning segment; the sequence is FGGAGATALVFLYFCIIFVVV. Residues 503 to 595 are Cytoplasmic-facing; that stretch reads RSCRKKSARP…YEYSEINIPK (93 aa). Residues 512-560 are disordered; that stretch reads PAVGVGDTGMEDANAVRGSASQGPLIESPADDSPPHHAPPALATPSPEE. Positions 563–568 match the ITIM motif motif; that stretch reads IQYASL. Residues Y565 and Y588 each carry the phosphotyrosine modification. Residues 586–591 carry the SLAM-like motif motif; sequence YEYSEI.

It belongs to the immunoglobulin superfamily. SIGLEC (sialic acid binding Ig-like lectin) family. Isoform Short is highly expressed in spleen, small intestine and adrenal gland; it is lower expressed in thyroid, placenta, brain, stomach, bone marrow, spinal cord and breast. Isoform Long is highly expressed in spleen, small intestine and bone marrow; it is lower expressed in thyroid, placenta, thymus, trachea, stomach, lung, adrenal gland, fetal brain and testis.

It localises to the membrane. Its function is as follows. Putative adhesion molecule that mediates sialic-acid dependent binding to cells. The sialic acid recognition site may be masked by cis interactions with sialic acids on the same cell surface. The polypeptide is Sialic acid-binding Ig-like lectin 12 (SIGLEC12) (Homo sapiens (Human)).